A 1058-amino-acid chain; its full sequence is Isoleucine--tRNA ligase (1058 aa).

The short motif at 48-58 (PYTTGHIHLGT) is the 'HIGH' region element. Positions 596–600 (KMSKS) match the 'KMSKS' region motif. An ATP-binding site is contributed by lysine 599.

It belongs to the class-I aminoacyl-tRNA synthetase family. IleS type 2 subfamily. In terms of assembly, monomer. Requires Zn(2+) as cofactor.

It is found in the cytoplasm. It carries out the reaction tRNA(Ile) + L-isoleucine + ATP = L-isoleucyl-tRNA(Ile) + AMP + diphosphate. Catalyzes the attachment of isoleucine to tRNA(Ile). As IleRS can inadvertently accommodate and process structurally similar amino acids such as valine, to avoid such errors it has two additional distinct tRNA(Ile)-dependent editing activities. One activity is designated as 'pretransfer' editing and involves the hydrolysis of activated Val-AMP. The other activity is designated 'posttransfer' editing and involves deacylation of mischarged Val-tRNA(Ile). The sequence is that of Isoleucine--tRNA ligase from Methanosarcina barkeri (strain Fusaro / DSM 804).